A 743-amino-acid polypeptide reads, in one-letter code: DNA ligase 2 (743 aa).

NAD(+)-binding positions include aspartate 45–aspartate 49, serine 94–leucine 95, and glutamate 125. Catalysis depends on lysine 127, which acts as the N6-AMP-lysine intermediate. Arginine 148, glutamate 185, lysine 301, and lysine 325 together coordinate NAD(+). Zn(2+)-binding residues include cysteine 419, cysteine 422, cysteine 438, and cysteine 444. Residues glutamate 639 to proline 728 enclose the BRCT domain. The disordered stretch occupies residues glutamate 720–glutamate 743. Low complexity predominate over residues alanine 725–glutamate 743.

The protein belongs to the NAD-dependent DNA ligase family. LigA subfamily. Mg(2+) is required as a cofactor. Mn(2+) serves as cofactor.

The catalysed reaction is NAD(+) + (deoxyribonucleotide)n-3'-hydroxyl + 5'-phospho-(deoxyribonucleotide)m = (deoxyribonucleotide)n+m + AMP + beta-nicotinamide D-nucleotide.. DNA ligase that catalyzes the formation of phosphodiester linkages between 5'-phosphoryl and 3'-hydroxyl groups in double-stranded DNA using NAD as a coenzyme and as the energy source for the reaction. It is essential for DNA replication and repair of damaged DNA. The protein is DNA ligase 2 of Streptomyces griseus subsp. griseus (strain JCM 4626 / CBS 651.72 / NBRC 13350 / KCC S-0626 / ISP 5235).